The primary structure comprises 896 residues: Probable DNA-directed RNA polymerase (896 aa).

Active-site residues include Asp-546, Lys-617, and Asp-798.

The protein belongs to the phage and mitochondrial RNA polymerase family.

It localises to the mitochondrion. It carries out the reaction RNA(n) + a ribonucleoside 5'-triphosphate = RNA(n+1) + diphosphate. DNA-dependent RNA polymerase catalyzes the transcription of DNA into RNA using the four ribonucleoside triphosphates as substrates. This Neurospora crassa protein is Probable DNA-directed RNA polymerase.